Reading from the N-terminus, the 304-residue chain is Dihydroorotate dehydrogenase B (NAD(+)), catalytic subunit (304 aa).

FMN contacts are provided by residues S21 and 45–46 (KA). Residues K45 and 69-73 (NAIGL) each bind substrate. FMN contacts are provided by N99 and N127. N127 is a substrate binding site. C130 acts as the Nucleophile in catalysis. FMN-binding residues include K165 and I191. 192–193 (NT) is a substrate binding site. Residues G217, 243-244 (GG), and 265-266 (GT) contribute to the FMN site.

This sequence belongs to the dihydroorotate dehydrogenase family. Type 1 subfamily. As to quaternary structure, heterotetramer of 2 PyrK and 2 PyrD type B subunits. The cofactor is FMN.

It localises to the cytoplasm. The enzyme catalyses (S)-dihydroorotate + NAD(+) = orotate + NADH + H(+). It functions in the pathway pyrimidine metabolism; UMP biosynthesis via de novo pathway; orotate from (S)-dihydroorotate (NAD(+) route): step 1/1. Catalyzes the conversion of dihydroorotate to orotate with NAD(+) as electron acceptor. The chain is Dihydroorotate dehydrogenase B (NAD(+)), catalytic subunit (pyrD) from Shouchella clausii (strain KSM-K16) (Alkalihalobacillus clausii).